The chain runs to 333 residues: Large ribosomal subunit protein mL39 (333 aa).

One can recognise a TGS domain in the interval 56–122 (DKIEVRYLGL…QESCTLQLLN (67 aa)). The tract at residues 311–333 (SKKPSPARLPNEPFEEQQQLQLS) is disordered.

The protein belongs to the mitochondrion-specific ribosomal protein mL39 family. As to quaternary structure, component of the mitochondrial ribosome large subunit (39S) which comprises a 16S rRNA and about 50 distinct proteins.

It is found in the mitochondrion. This is Large ribosomal subunit protein mL39 (mRpL39) from Drosophila melanogaster (Fruit fly).